The primary structure comprises 1360 residues: DNA-directed RNA polymerase subunit beta (1360 aa).

It belongs to the RNA polymerase beta chain family. The RNAP catalytic core consists of 2 alpha, 1 beta, 1 beta' and 1 omega subunit. When a sigma factor is associated with the core the holoenzyme is formed, which can initiate transcription.

It carries out the reaction RNA(n) + a ribonucleoside 5'-triphosphate = RNA(n+1) + diphosphate. Functionally, DNA-dependent RNA polymerase catalyzes the transcription of DNA into RNA using the four ribonucleoside triphosphates as substrates. This is DNA-directed RNA polymerase subunit beta from Magnetococcus marinus (strain ATCC BAA-1437 / JCM 17883 / MC-1).